A 342-amino-acid chain; its full sequence is Tetraacyldisaccharide 4'-kinase (342 aa).

T68–T75 is a binding site for ATP.

Belongs to the LpxK family.

It catalyses the reaction a lipid A disaccharide + ATP = a lipid IVA + ADP + H(+). The protein operates within glycolipid biosynthesis; lipid IV(A) biosynthesis; lipid IV(A) from (3R)-3-hydroxytetradecanoyl-[acyl-carrier-protein] and UDP-N-acetyl-alpha-D-glucosamine: step 6/6. Functionally, transfers the gamma-phosphate of ATP to the 4'-position of a tetraacyldisaccharide 1-phosphate intermediate (termed DS-1-P) to form tetraacyldisaccharide 1,4'-bis-phosphate (lipid IVA). This is Tetraacyldisaccharide 4'-kinase from Burkholderia pseudomallei (strain K96243).